Reading from the N-terminus, the 246-residue chain is Uridylate kinase (246 aa).

ATP is bound at residue Lys-11–Gly-14. Residue Gly-53 coordinates UMP. ATP contacts are provided by Gly-54 and Arg-58. Residues Asp-73 and Thr-134 to Thr-141 each bind UMP. ATP is bound by residues Thr-161, Tyr-167, and Asp-170.

The protein belongs to the UMP kinase family. In terms of assembly, homohexamer.

It is found in the cytoplasm. The catalysed reaction is UMP + ATP = UDP + ADP. Its pathway is pyrimidine metabolism; CTP biosynthesis via de novo pathway; UDP from UMP (UMPK route): step 1/1. With respect to regulation, inhibited by UTP. In terms of biological role, catalyzes the reversible phosphorylation of UMP to UDP. This is Uridylate kinase from Leptospira borgpetersenii serovar Hardjo-bovis (strain JB197).